Consider the following 539-residue polypeptide: 2-isopropylmalate synthase (539 aa).

The region spanning 8-269 (VLIFDTTLRD…YFNPFFGRPP (262 aa)) is the Pyruvate carboxyltransferase domain. Mn(2+) contacts are provided by aspartate 17, histidine 208, histidine 210, and asparagine 244. The segment at 408–539 (QLKLVQVSCG…DLAKVEKKGI (132 aa)) is regulatory domain.

The protein belongs to the alpha-IPM synthase/homocitrate synthase family. LeuA type 1 subfamily. As to quaternary structure, homodimer. Mn(2+) serves as cofactor.

Its subcellular location is the cytoplasm. The enzyme catalyses 3-methyl-2-oxobutanoate + acetyl-CoA + H2O = (2S)-2-isopropylmalate + CoA + H(+). It participates in amino-acid biosynthesis; L-leucine biosynthesis; L-leucine from 3-methyl-2-oxobutanoate: step 1/4. Catalyzes the condensation of the acetyl group of acetyl-CoA with 3-methyl-2-oxobutanoate (2-ketoisovalerate) to form 3-carboxy-3-hydroxy-4-methylpentanoate (2-isopropylmalate). The protein is 2-isopropylmalate synthase of Prochlorococcus marinus (strain NATL2A).